Consider the following 353-residue polypeptide: Photosystem II D2 protein (353 aa).

Threonine 2 carries the post-translational modification N-acetylthreonine. The residue at position 2 (threonine 2) is a Phosphothreonine. The helical transmembrane segment at 41–61 (CAYFALGGWFTGTTFVTSWYT) threads the bilayer. Position 118 (histidine 118) interacts with chlorophyll a. Residues 125–141 (GFMLRQFELARSVQLRP) form a helical membrane-spanning segment. Positions 130 and 143 each coordinate pheophytin a. A helical membrane pass occupies residues 153–166 (VFVSVFLIYPLGQS). A chlorophyll a-binding site is contributed by histidine 198. The chain crosses the membrane as a helical span at residues 208 to 228 (AALLCAIHGATVENTLFEDGD). Histidine 215 and phenylalanine 262 together coordinate a plastoquinone. Residue histidine 215 coordinates Fe cation. Fe cation is bound at residue histidine 269. The helical transmembrane segment at 279–295 (GLWMSALGVVGLALNLR) threads the bilayer.

Belongs to the reaction center PufL/M/PsbA/D family. As to quaternary structure, PSII is composed of 1 copy each of membrane proteins PsbA, PsbB, PsbC, PsbD, PsbE, PsbF, PsbH, PsbI, PsbJ, PsbK, PsbL, PsbM, PsbT, PsbX, PsbY, PsbZ, Psb30/Ycf12, at least 3 peripheral proteins of the oxygen-evolving complex and a large number of cofactors. It forms dimeric complexes. It depends on The D1/D2 heterodimer binds P680, chlorophylls that are the primary electron donor of PSII, and subsequent electron acceptors. It shares a non-heme iron and each subunit binds pheophytin, quinone, additional chlorophylls, carotenoids and lipids. There is also a Cl(-1) ion associated with D1 and D2, which is required for oxygen evolution. The PSII complex binds additional chlorophylls, carotenoids and specific lipids. as a cofactor.

The protein localises to the plastid. It localises to the chloroplast thylakoid membrane. The catalysed reaction is 2 a plastoquinone + 4 hnu + 2 H2O = 2 a plastoquinol + O2. Photosystem II (PSII) is a light-driven water:plastoquinone oxidoreductase that uses light energy to abstract electrons from H(2)O, generating O(2) and a proton gradient subsequently used for ATP formation. It consists of a core antenna complex that captures photons, and an electron transfer chain that converts photonic excitation into a charge separation. The D1/D2 (PsbA/PsbD) reaction center heterodimer binds P680, the primary electron donor of PSII as well as several subsequent electron acceptors. D2 is needed for assembly of a stable PSII complex. The polypeptide is Photosystem II D2 protein (Chloranthus spicatus (Chulantree)).